Reading from the N-terminus, the 275-residue chain is Small ribosomal subunit protein uS3 (275 aa).

In terms of domain architecture, KH type-2 spans 38-106 (IRRMMTSGME…QVQLNILEVK (69 aa)). The segment covering 216–228 (NAAARAGNRPARG) has biased composition (low complexity). Residues 216–275 (NAAARAGNRPARGGADRPARGGRGGERGGRGRKPQQAPAAEAPKAEAPAAAPAESTGTEA) form a disordered region. Positions 229–244 (GADRPARGGRGGERGG) are enriched in basic and acidic residues. Residues 249 to 268 (PQQAPAAEAPKAEAPAAAPA) show a composition bias toward low complexity.

The protein belongs to the universal ribosomal protein uS3 family. Part of the 30S ribosomal subunit. Forms a tight complex with proteins S10 and S14.

Functionally, binds the lower part of the 30S subunit head. Binds mRNA in the 70S ribosome, positioning it for translation. In Streptomyces avermitilis (strain ATCC 31267 / DSM 46492 / JCM 5070 / NBRC 14893 / NCIMB 12804 / NRRL 8165 / MA-4680), this protein is Small ribosomal subunit protein uS3.